The primary structure comprises 853 residues: DNA mismatch repair protein MutS (853 aa).

An ATP-binding site is contributed by 614-621; it reads GPNMGGKS.

Belongs to the DNA mismatch repair MutS family.

In terms of biological role, this protein is involved in the repair of mismatches in DNA. It is possible that it carries out the mismatch recognition step. This protein has a weak ATPase activity. The sequence is that of DNA mismatch repair protein MutS from Escherichia coli O7:K1 (strain IAI39 / ExPEC).